A 269-amino-acid chain; its full sequence is Novel plant SNARE 13 (269 aa).

The Cytoplasmic segment spans residues 1–217 (MASNLPMSPQ…IGRQVATDKC (217 aa)). Positions 33-94 (DKIKDSTRQS…KQSMIKELNS (62 aa)) form a coiled coil. Phosphoserine is present on S74. The 63-residue stretch at 146-208 (MKRMDETDQA…KKASQLVKEI (63 aa)) folds into the t-SNARE coiled-coil homology domain. A helical; Anchor for type IV membrane protein membrane pass occupies residues 218–238 (IMGFLFLIVCGVVAIIIVKIV). Over 239 to 269 (NPNNKDIRDIPGLAPPAQSRKLLYLRNQDYM) the chain is Vesicular.

The protein belongs to the novel plant SNARE family.

It is found in the membrane. In terms of biological role, vesicle trafficking protein that functions in the secretory pathway. The protein is Novel plant SNARE 13 (NPSN13) of Arabidopsis thaliana (Mouse-ear cress).